A 216-amino-acid chain; its full sequence is MSEAYFRVESGALGPEENFLSLDDILMSHEKLSVRTEIPMPRLGAFFLDRSGGAETDNAIPEGTKLELPLWLAKGLFDNKRRILSVELPKIYQEGWRTVFSADANVVDLHKMGPHFYGFGSQLLHFDSPENADISHSLLQTFVGRFRRIMDSSQNAYNEDTSALVARLDEMERGLFQTGQKGLNDFQCWEKGQASQLTASNLVQNYAKRKFTDMED.

The tract at residues 1–16 is not essential for folding and stability of GINS complex, but may regulate accessibility to the central complex pore; the sequence is MSEAYFRVESGALGPE.

It belongs to the GINS3/PSF3 family. In terms of assembly, component of the GINS complex which is a heterotetramer of GINS1, GINS2, GINS3 and GINS4. Forms a stable subcomplex with GINS2. GINS complex interacts with DNA primase in vitro. Component of the CMG helicase complex, a hexameric ring of related MCM2-7 subunits stabilized by CDC45 and the tetrameric GINS complex.

Its subcellular location is the nucleus. It is found in the chromosome. Its function is as follows. Required for correct functioning of the GINS complex, a complex that plays an essential role in the initiation of DNA replication, and progression of DNA replication forks. GINS complex is a core component of CDC45-MCM-GINS (CMG) helicase, the molecular machine that unwinds template DNA during replication, and around which the replisome is built. The protein is DNA replication complex GINS protein PSF3 (GINS3) of Bos taurus (Bovine).